Consider the following 717-residue polypeptide: F-box only protein 42 (717 aa).

Over residues 1 to 30 (MASSSDSEDDSFMAVDQEETVLEGTMDQDE) the composition is skewed to acidic residues. A disordered region spans residues 1–34 (MASSSDSEDDSFMAVDQEETVLEGTMDQDEEPHP). Residues 44–93 (NRSMSELPEEVLEYILSFLSPYQEHKTAALVCKQWYRLIKGVAHQCYHGF) form the F-box domain. Kelch repeat units lie at residues 132–184 (SMYV…VYKD), 186–242 (LVLF…VIDD), 244–293 (MIVF…VIDD), and 295–342 (TILI…LWCH). The interval 361 to 474 (RAPLSPSLNS…PSTPSAPEGY (114 aa)) is disordered. Residues 363-376 (PLSPSLNSRPSPIS) are compositionally biased toward low complexity. Phosphoserine is present on residues S365 and S373. Residue T378 is modified to Phosphothreonine. Composition is skewed to polar residues over residues 416–426 (QRQTPSGSREG) and 455–469 (SLDS…STPS). S552 is subject to Phosphoserine. Positions 570–596 (GPSASAALSPPLGSSPGSPGSQSLSSG) are enriched in low complexity. A disordered region spans residues 570 to 631 (GPSASAALSP…GHHPPQSLNV (62 aa)).

In terms of assembly, component of some SCF complex, composed of CUL1, SKP1, RBX1 and FBXO42. Interacts (via the kelch domain) with p53/TP53; interaction is direct.

Substrate-recognition component of some SCF (SKP1-CUL1-F-box protein)-type E3 ubiquitin ligase complex. Specifically recognizes p53/TP53, promoting its ubiquitination and degradation. This chain is F-box only protein 42 (FBXO42), found in Homo sapiens (Human).